Consider the following 226-residue polypeptide: Beta-phosphoglucomutase (226 aa).

Catalysis depends on aspartate 7, which acts as the Nucleophile. Residues aspartate 7 and aspartate 9 each coordinate Mg(2+). Aspartate 7 is modified (4-aspartylphosphate). Aspartate 9 (proton donor/acceptor) is an active-site residue. The beta-D-glucose 6-phosphate site is built by aspartate 9, glycine 44, isoleucine 45, arginine 47, serine 116, arginine 117, and asparagine 118. Aspartate 170 is a binding site for Mg(2+).

Belongs to the HAD-like hydrolase superfamily. CbbY/CbbZ/Gph/YieH family. In terms of assembly, homodimer. It depends on Mg(2+) as a cofactor. In terms of processing, autophosphorylated.

The protein resides in the cytoplasm. The catalysed reaction is beta-D-glucose 1-phosphate = beta-D-glucose 6-phosphate. Functionally, catalyzes the interconversion of D-glucose 1-phosphate (G1P) and D-glucose 6-phosphate (G6P), forming beta-D-glucose 1,6-(bis)phosphate (beta-G16P) as an intermediate. The protein is Beta-phosphoglucomutase (yvdM) of Bacillus subtilis (strain 168).